The following is a 377-amino-acid chain: Nitric oxide reductase FlRd-NAD(+) reductase (377 aa).

The protein belongs to the FAD-dependent oxidoreductase family. It depends on FAD as a cofactor.

The protein resides in the cytoplasm. It carries out the reaction 2 reduced [nitric oxide reductase rubredoxin domain] + NAD(+) + H(+) = 2 oxidized [nitric oxide reductase rubredoxin domain] + NADH. The protein operates within nitrogen metabolism; nitric oxide reduction. Functionally, one of at least two accessory proteins for anaerobic nitric oxide (NO) reductase. Reduces the rubredoxin moiety of NO reductase. The polypeptide is Nitric oxide reductase FlRd-NAD(+) reductase (Escherichia coli (strain SMS-3-5 / SECEC)).